A 560-amino-acid polypeptide reads, in one-letter code: N-acetylglucosamine-6-sulfatase (560 aa).

The interval 1–25 is disordered; sequence MRLLSLAPDRPRRGGPRHLTSGSPA. The N-terminal stretch at 1-48 is a signal peptide; it reads MRLLSLAPDRPRRGGPRHLTSGSPALPPPPPLLLLLLLLGGCLGVSGA. Ca(2+) is bound by residues Asp63, Asp64, and Cys99. The Nucleophile role is filled by Cys99. Residue Cys99 is modified to 3-oxoalanine (Cys). 7 N-linked (GlcNAc...) asparagine glycosylation sites follow: Asn119, Asn125, Asn191, Asn206, Asn218, Asn287, and Asn325. Residues Asp334 and Asn335 each coordinate Ca(2+). N-linked (GlcNAc...) asparagine glycans are attached at residues Asn370, Asn395, Asn413, Asn430, Asn457, and Asn488. Ser549 is subject to Phosphoserine.

Belongs to the sulfatase family. The cofactor is Ca(2+). Post-translationally, the conversion to 3-oxoalanine (also known as C-formylglycine, FGly), of a serine or cysteine residue in prokaryotes and of a cysteine residue in eukaryotes, is critical for catalytic activity.

Its subcellular location is the lysosome. The catalysed reaction is Hydrolysis of the 6-sulfate groups of the N-acetyl-D-glucosamine 6-sulfate units of heparan sulfate and keratan sulfate.. Hydrolyzes 6-sulfate groups in N-acetyl-d-glucosaminide units of heparin sulfate and keratan sulfate. The polypeptide is N-acetylglucosamine-6-sulfatase (GNS) (Bos taurus (Bovine)).